The following is a 446-amino-acid chain: UDP-N-acetylmuramoylalanine--D-glutamate ligase (446 aa).

ATP is bound at residue 115–121; sequence GSNGKST.

It belongs to the MurCDEF family.

It is found in the cytoplasm. It catalyses the reaction UDP-N-acetyl-alpha-D-muramoyl-L-alanine + D-glutamate + ATP = UDP-N-acetyl-alpha-D-muramoyl-L-alanyl-D-glutamate + ADP + phosphate + H(+). It participates in cell wall biogenesis; peptidoglycan biosynthesis. In terms of biological role, cell wall formation. Catalyzes the addition of glutamate to the nucleotide precursor UDP-N-acetylmuramoyl-L-alanine (UMA). In Hahella chejuensis (strain KCTC 2396), this protein is UDP-N-acetylmuramoylalanine--D-glutamate ligase.